The primary structure comprises 247 residues: 5'-nucleotidase SurE (247 aa).

A divalent metal cation contacts are provided by aspartate 8, aspartate 9, serine 39, and asparagine 91.

It belongs to the SurE nucleotidase family. It depends on a divalent metal cation as a cofactor.

It is found in the cytoplasm. The enzyme catalyses a ribonucleoside 5'-phosphate + H2O = a ribonucleoside + phosphate. Functionally, nucleotidase that shows phosphatase activity on nucleoside 5'-monophosphates. The sequence is that of 5'-nucleotidase SurE from Leptospira biflexa serovar Patoc (strain Patoc 1 / Ames).